A 287-amino-acid polypeptide reads, in one-letter code: Large ribosomal subunit protein uL2 (287 aa).

Residues 221 to 287 (RGSVMNPCDH…SKRSRGGRDS (67 aa)) form a disordered region. The segment covering 258–287 (KTRKRNKPSNRFVLRKRRRTSKRSRGGRDS) has biased composition (basic residues).

The protein belongs to the universal ribosomal protein uL2 family. In terms of assembly, part of the 50S ribosomal subunit. Forms a bridge to the 30S subunit in the 70S ribosome.

One of the primary rRNA binding proteins. Required for association of the 30S and 50S subunits to form the 70S ribosome, for tRNA binding and peptide bond formation. It has been suggested to have peptidyltransferase activity; this is somewhat controversial. Makes several contacts with the 16S rRNA in the 70S ribosome. In Prochlorococcus marinus (strain MIT 9313), this protein is Large ribosomal subunit protein uL2.